We begin with the raw amino-acid sequence, 261 residues long: General secretion pathway protein N (261 aa).

Over 1–10 (MRLEMIGLRT) the chain is Cytoplasmic. The chain crosses the membrane as a helical span at residues 11–31 (WLLATVVGWALLVCVLAVAGL). Over 32–261 (GKRVELLPDD…QGGSTPGQTQ (230 aa)) the chain is Periplasmic. The tract at residues 158-261 (VFNGQGGQPP…QGGSTPGQTQ (104 aa)) is disordered. Positions 179–200 (AVPPLPPNVPPAPATPAPPPAE) are enriched in pro residues. A compositionally biased stretch (low complexity) spans 201–211 (VPQQQPGGQAP). Residues 227–244 (RPSDEQMRAIRERIEARR) are compositionally biased toward basic and acidic residues.

Binds to XpsD.

The protein localises to the cell inner membrane. Its function is as follows. Involved in a general secretion pathway (GSP) for the export of proteins. The polypeptide is General secretion pathway protein N (xpsN) (Xanthomonas campestris pv. campestris (strain ATCC 33913 / DSM 3586 / NCPPB 528 / LMG 568 / P 25)).